Here is a 578-residue protein sequence, read N- to C-terminus: Proline--tRNA ligase (578 aa).

The protein belongs to the class-II aminoacyl-tRNA synthetase family. ProS type 1 subfamily. In terms of assembly, homodimer.

Its subcellular location is the cytoplasm. It carries out the reaction tRNA(Pro) + L-proline + ATP = L-prolyl-tRNA(Pro) + AMP + diphosphate. In terms of biological role, catalyzes the attachment of proline to tRNA(Pro) in a two-step reaction: proline is first activated by ATP to form Pro-AMP and then transferred to the acceptor end of tRNA(Pro). As ProRS can inadvertently accommodate and process non-cognate amino acids such as alanine and cysteine, to avoid such errors it has two additional distinct editing activities against alanine. One activity is designated as 'pretransfer' editing and involves the tRNA(Pro)-independent hydrolysis of activated Ala-AMP. The other activity is designated 'posttransfer' editing and involves deacylation of mischarged Ala-tRNA(Pro). The misacylated Cys-tRNA(Pro) is not edited by ProRS. The chain is Proline--tRNA ligase from Burkholderia orbicola (strain AU 1054).